The chain runs to 449 residues: NADH-quinone oxidoreductase subunit H (449 aa).

9 consecutive transmembrane segments (helical) span residues 29–49 (ILLKAVAVFAFLLLMTLFAIV), 96–116 (PIFILAPIVSAVPAFLAFAVI), 136–156 (LPVSVLYLLAAASLGVYGLIL), 177–197 (IISYEVAMGLAFVAVFIYAGT), 211–231 (WYIVLVPSFVLYCISMVGETN), 259–279 (FFFLAEYINMVTVSAIATTLF), 298–318 (WVPLIWFVLKLLAFLFFFIWL), 330–350 (FMSFGWKVLIPVGLVWVLAVA), and 365–385 (WLVGFGVVVGILLIVALIDPG). A compositionally biased stretch (basic and acidic residues) spans 393-402 (LEEAEQRKLA). The tract at residues 393–449 (LEEAEQRKLAEAPSLDRIPWPPPPQAAGRGRPAVSAGASANGSSTVIPADPGPRQER) is disordered. A compositionally biased stretch (low complexity) spans 418-436 (AAGRGRPAVSAGASANGSS).

The protein belongs to the complex I subunit 1 family. NDH-1 is composed of 14 different subunits. Subunits NuoA, H, J, K, L, M, N constitute the membrane sector of the complex.

It localises to the cell membrane. The catalysed reaction is a quinone + NADH + 5 H(+)(in) = a quinol + NAD(+) + 4 H(+)(out). In terms of biological role, NDH-1 shuttles electrons from NADH, via FMN and iron-sulfur (Fe-S) centers, to quinones in the respiratory chain. The immediate electron acceptor for the enzyme in this species is believed to be ubiquinone. Couples the redox reaction to proton translocation (for every two electrons transferred, four hydrogen ions are translocated across the cytoplasmic membrane), and thus conserves the redox energy in a proton gradient. This subunit may bind ubiquinone. This Frankia casuarinae (strain DSM 45818 / CECT 9043 / HFP020203 / CcI3) protein is NADH-quinone oxidoreductase subunit H.